Here is a 441-residue protein sequence, read N- to C-terminus: Ribulose bisphosphate carboxylase large chain (441 aa).

N89 and T139 together coordinate substrate. Catalysis depends on K141, which acts as the Proton acceptor. Substrate is bound at residue K143. 3 residues coordinate Mg(2+): K167, D169, and E170. K167 carries the N6-carboxylysine modification. Catalysis depends on H260, which acts as the Proton acceptor. 3 residues coordinate substrate: R261, H293, and S345.

This sequence belongs to the RuBisCO large chain family. Type I subfamily. In terms of assembly, heterohexadecamer of 8 large chains and 8 small chains; disulfide-linked. The disulfide link is formed within the large subunit homodimers. It depends on Mg(2+) as a cofactor. In terms of processing, the disulfide bond which can form in the large chain dimeric partners within the hexadecamer appears to be associated with oxidative stress and protein turnover.

Its subcellular location is the plastid. The protein localises to the chloroplast. The enzyme catalyses 2 (2R)-3-phosphoglycerate + 2 H(+) = D-ribulose 1,5-bisphosphate + CO2 + H2O. The catalysed reaction is D-ribulose 1,5-bisphosphate + O2 = 2-phosphoglycolate + (2R)-3-phosphoglycerate + 2 H(+). Its function is as follows. RuBisCO catalyzes two reactions: the carboxylation of D-ribulose 1,5-bisphosphate, the primary event in carbon dioxide fixation, as well as the oxidative fragmentation of the pentose substrate in the photorespiration process. Both reactions occur simultaneously and in competition at the same active site. In Polemonium reptans (Greek valerian), this protein is Ribulose bisphosphate carboxylase large chain.